Here is a 421-residue protein sequence, read N- to C-terminus: UDP-N-acetylglucosamine 1-carboxyvinyltransferase (421 aa).

22–23 (KN) lines the phosphoenolpyruvate pocket. Residue Arg-92 coordinates UDP-N-acetyl-alpha-D-glucosamine. Catalysis depends on Cys-116, which acts as the Proton donor. At Cys-116 the chain carries 2-(S-cysteinyl)pyruvic acid O-phosphothioketal. Residues 121–125 (RPVDQ), Asp-304, and Ile-326 each bind UDP-N-acetyl-alpha-D-glucosamine.

This sequence belongs to the EPSP synthase family. MurA subfamily.

The protein localises to the cytoplasm. The enzyme catalyses phosphoenolpyruvate + UDP-N-acetyl-alpha-D-glucosamine = UDP-N-acetyl-3-O-(1-carboxyvinyl)-alpha-D-glucosamine + phosphate. It participates in cell wall biogenesis; peptidoglycan biosynthesis. Cell wall formation. Adds enolpyruvyl to UDP-N-acetylglucosamine. The polypeptide is UDP-N-acetylglucosamine 1-carboxyvinyltransferase (Bordetella avium (strain 197N)).